The following is a 903-amino-acid chain: Probable dipeptidyl-aminopeptidase B (903 aa).

The disordered stretch occupies residues 1 to 83 (MGKFEDDGNS…PLISSGTKTG (83 aa)). Over 1–90 (MGKFEDDGNS…KTGSSSRLRK (90 aa)) the chain is Cytoplasmic. The span at 10–37 (SESVPLTRQRSESLASQTSTDSGLSIAS) shows a compositional bias: polar residues. Residues 91 to 111 (IVWLLVLLCVGGWVLSFVLFL) form a helical; Signal-anchor for type II membrane protein membrane-spanning segment. At 112–903 (TQKRPDTAAL…TANPKPQEST (792 aa)) the chain is on the vacuolar side. A disordered region spans residues 121-143 (LSSASTVEIHEPGPATGGTSHGK). Residues N268, N349, and N640 are each glycosylated (N-linked (GlcNAc...) asparagine). S754 serves as the catalytic Charge relay system. N808 is a glycosylation site (N-linked (GlcNAc...) asparagine). Residues D831 and H864 each act as charge relay system in the active site.

It belongs to the peptidase S9B family.

It is found in the vacuole membrane. It carries out the reaction Release of an N-terminal dipeptide, Xaa-Yaa-|-Zaa-, from a polypeptide, preferentially when Yaa is Pro, provided Zaa is neither Pro nor hydroxyproline.. In terms of biological role, type IV dipeptidyl-peptidase which removes N-terminal dipeptides sequentially from polypeptides having unsubstituted N-termini provided that the penultimate residue is proline. This is Probable dipeptidyl-aminopeptidase B (dapB) from Penicillium rubens (strain ATCC 28089 / DSM 1075 / NRRL 1951 / Wisconsin 54-1255) (Penicillium chrysogenum).